The following is a 542-amino-acid chain: Aspartate kinase FUB3 (542 aa).

ACT domains follow at residues 404–472 and 478–542; these read ILSN…VLPD and LVGA…KSAI.

The protein belongs to the aspartokinase family.

It carries out the reaction L-aspartate + ATP = 4-phospho-L-aspartate + ADP. It functions in the pathway mycotoxin biosynthesis. In terms of biological role, aspartate kinase; part of the gene cluster that mediates the biosynthesis of fusaric acid, a mycotoxin with low to moderate toxicity to animals and humans, but with high phytotoxic properties. L-aspartate is suggested as fusaric acid amino acid precursor that is activated and further processed to O-acetyl-L-homoserine by cluster enzymes aspartate kinase FUB3 and homoserine O-acetyltransferase FUB5, as well as enzymes of the primary metabolism. The polyketide synthase (PKS) FUB1 generates the triketide trans-2-hexenal which is presumptively released by the hydrolase FUB4 and linked to the NRPS-bound amino acid precursor by NAD(P)-dependent dehydrogenase FUB6. FUB1, FUB4, and the non-canonical NRPS Fub8 may form an enzyme complex. Further processing of the NRPS-bound intermediate might be carried out by FUB6 and the sulfhydrylase FUB7, enabling a spontaneous electrocyclization to close the carbon backbone of fusaric acid. Dihydrofusaric acid is likely to be released via reduction by the thioester reductase (TR) domain of FUB8 whereupon the final oxidation to fusaric acid may (also) be performed by the FMN-dependent dehydrogenase FUB9. In Fusarium oxysporum f. sp. lycopersici (strain 4287 / CBS 123668 / FGSC 9935 / NRRL 34936) (Fusarium vascular wilt of tomato), this protein is Aspartate kinase FUB3.